The following is a 359-amino-acid chain: 3-dehydroquinate synthase (359 aa).

Residues 69–74 (SGESSK), 103–107 (GVVGD), 127–128 (TT), K139, K148, and 166–169 (TLST) each bind NAD(+). Zn(2+)-binding residues include E181, H242, and H259.

The protein belongs to the sugar phosphate cyclases superfamily. Dehydroquinate synthase family. It depends on NAD(+) as a cofactor. Requires Co(2+) as cofactor. Zn(2+) is required as a cofactor.

Its subcellular location is the cytoplasm. It carries out the reaction 7-phospho-2-dehydro-3-deoxy-D-arabino-heptonate = 3-dehydroquinate + phosphate. The protein operates within metabolic intermediate biosynthesis; chorismate biosynthesis; chorismate from D-erythrose 4-phosphate and phosphoenolpyruvate: step 2/7. Functionally, catalyzes the conversion of 3-deoxy-D-arabino-heptulosonate 7-phosphate (DAHP) to dehydroquinate (DHQ). This is 3-dehydroquinate synthase from Oceanobacillus iheyensis (strain DSM 14371 / CIP 107618 / JCM 11309 / KCTC 3954 / HTE831).